A 287-amino-acid chain; its full sequence is Large ribosomal subunit protein uL2 (287 aa).

A disordered region spans residues 221–287 (RGSVMNPCDH…SKRSRGGRDS (67 aa)). The span at 258–287 (KTRKRNKPSNRFVLRKRRRVSKRSRGGRDS) shows a compositional bias: basic residues.

This sequence belongs to the universal ribosomal protein uL2 family. Part of the 50S ribosomal subunit. Forms a bridge to the 30S subunit in the 70S ribosome.

Its function is as follows. One of the primary rRNA binding proteins. Required for association of the 30S and 50S subunits to form the 70S ribosome, for tRNA binding and peptide bond formation. It has been suggested to have peptidyltransferase activity; this is somewhat controversial. Makes several contacts with the 16S rRNA in the 70S ribosome. This Prochlorococcus marinus (strain SARG / CCMP1375 / SS120) protein is Large ribosomal subunit protein uL2.